A 249-amino-acid polypeptide reads, in one-letter code: MIT domain-containing protein 1 (249 aa).

An MIT domain is found at 8-86 (QDSDSTAAVA…KYLDQEKEDG (79 aa)). Residues 168 to 231 (SGLEEIKQSL…SLGYYDLDLR (64 aa)) are important for association with membranes.

Homodimer. Interacts (via MIT domain) with CHMP1A, CHMP1B, CHMP2A and IST1.

The protein localises to the late endosome membrane. It is found in the midbody. It localises to the membrane. In terms of biological role, required for efficient abscission at the end of cytokinesis, together with components of the ESCRT-III complex. The chain is MIT domain-containing protein 1 (Mitd1) from Mus musculus (Mouse).